A 220-amino-acid polypeptide reads, in one-letter code: Small ribosomal subunit protein mS42 (220 aa).

This sequence belongs to the mitochondrion-specific ribosomal protein mS42 family. Component of the mitochondrial small ribosomal subunit (mt-SSU). Mature yeast 74S mitochondrial ribosomes consist of a small (37S) and a large (54S) subunit. The 37S small subunit contains a 15S ribosomal RNA (15S mt-rRNA) and at least 32 different proteins. The 54S large subunit contains a 21S rRNA (21S mt-rRNA) and at least 45 different proteins. mS43 forms a dimer with mS42, building a large protuberance adjacent to the mRNA channel exit in the mt-SSU body.

The protein localises to the mitochondrion. Component of the mitochondrial ribosome (mitoribosome), a dedicated translation machinery responsible for the synthesis of mitochondrial genome-encoded proteins, including at least some of the essential transmembrane subunits of the mitochondrial respiratory chain. The mitoribosomes are attached to the mitochondrial inner membrane and translation products are cotranslationally integrated into the membrane. This is Small ribosomal subunit protein mS42 from Schizosaccharomyces pombe (strain 972 / ATCC 24843) (Fission yeast).